A 722-amino-acid polypeptide reads, in one-letter code: MKKIICYFTIILLTFGIDAMEDNNKQIYNPKETKFLEEAAGAEALKWAKERTNKTEKALQAMQEYKRIKKEIESIFYDQRKTLYGVIRKGYVYNFWMDDKNPQGLWRRTLVDNYYKDKPNWEVLIDFDKLSKKIGKKVAYRGVSNCVQNPNRYLISMSFGGKDEMFFREWDLEKKDFVKNGFEPITSCGKLLEGKFTYPTWVNKDTIIFNPVLYKDEITSSLYPNSLYIWKRGEAIEKARKLFEVPKEYIRVSADKLLSDAISSSLIFISADKDFYNYDNYILDTQDKNFKLQKINMPSDATLQGSFKEYVFWLLRSDWKFKNHNIKAGSLVALHFTDLLKAESDKTSLKILFTPTENEVFNFIGTTKDRVFLATYDNVVSKVVTFTLENEQWTKPVILKLPYQNAIFRMSSYEDEEEALITIENAIVPPTIYLWVKTHELKVIRKALYSFDSENYVLEQKEATSFDGVKIPYFIVYKKGIKFDGKNPTLLEAYGGFQVINSPYFSRIKNEVWVKNGGVSVLANIRGGGEFGPEWHKAAQGIKRQTAFNDFFAVSEELIKQNITSPEYLGIKGGSNGGLLVSVAMTQRPELFGAIACEVPILDMIRYKEFGAGNSWVTEYGDPEIPNDLLHIKKYAPLENLSLTQKYPTVLITDSVLDQRVHPWHGRIFEYVLAQNPNTKTYFLESRDSGHSSGSDLKESANYFINLYTFFANTLKLKLIKF.

Catalysis depends on charge relay system residues S575, D658, and H691.

Belongs to the peptidase S9B family.

This is an uncharacterized protein from Rickettsia prowazekii (strain Madrid E).